The sequence spans 389 residues: Cytochrome b (389 aa).

A run of 4 helical transmembrane segments spans residues 32 to 52 (FGSL…FLAM), 76 to 98 (WIVR…AHIG), 113 to 133 (LWSI…LGYV), and 179 to 199 (FFSL…AHFM). Heme b-binding residues include histidine 82 and histidine 96. The heme b site is built by histidine 183 and histidine 197. Histidine 202 is a binding site for a ubiquinone. 4 consecutive transmembrane segments (helical) span residues 225 to 245 (FIFK…VIVF), 289 to 309 (LLGV…PLTD), 321 to 341 (AMKF…WLGS), and 348 to 368 (YLEI…VIVP).

Belongs to the cytochrome b family. Fungal cytochrome b-c1 complex contains 10 subunits; 3 respiratory subunits, 2 core proteins and 5 low-molecular weight proteins. Cytochrome b-c1 complex is a homodimer. It depends on heme b as a cofactor.

The protein localises to the mitochondrion inner membrane. Functionally, component of the ubiquinol-cytochrome c reductase complex (complex III or cytochrome b-c1 complex) that is part of the mitochondrial respiratory chain. The b-c1 complex mediates electron transfer from ubiquinol to cytochrome c. Contributes to the generation of a proton gradient across the mitochondrial membrane that is then used for ATP synthesis. This Strobilurus tenacellus protein is Cytochrome b (COB).